We begin with the raw amino-acid sequence, 554 residues long: Sesquithujene synthase A (554 aa).

Mg(2+)-binding residues include aspartate 308 and aspartate 312. Positions 308 and 312 each coordinate substrate. The DDXXD motif motif lies at 308–312; it reads DDMFD. A determine the stereoselectivity of the enzyme region spans residues 407–411; the sequence is SIGAN. Substrate is bound by residues arginine 449 and asparagine 452. Residues asparagine 452, serine 456, and glutamate 460 each coordinate Mg(2+).

It belongs to the terpene synthase family. In terms of assembly, monomer. The cofactor is Mg(2+). It depends on Mn(2+) as a cofactor. Highly expressed in the husk. Detected in leaves.

The protein localises to the cytoplasm. It catalyses the reaction (2E,6E)-farnesyl diphosphate = sesquithujene + diphosphate. The catalysed reaction is (2Z,6Z)-farnesyl diphosphate = (1S,5S,6S)-alpha-bergamotene + diphosphate. The enzyme catalyses (2E,6E)-farnesyl diphosphate = (E)-beta-farnesene + diphosphate. It carries out the reaction (2E,6E)-farnesyl diphosphate = (S)-beta-bisabolene + diphosphate. It catalyses the reaction (2Z,6E)-farnesyl diphosphate = (-)-beta-curcumene + diphosphate. The catalysed reaction is (2E,6E)-farnesyl diphosphate = gamma-curcumene + diphosphate. The enzyme catalyses (2E,6E)-farnesyl diphosphate = sesquisabinene B + diphosphate. The protein operates within secondary metabolite biosynthesis; terpenoid biosynthesis. Sesquiterpene synthase involved in the production after herbivore attack of a blend of volatiles that attracts natural enemies of herbivores. Converts farnesyl diphosphate to sesquithujene, (S)-beta-bisabolene, (Z)-alpha-bergamotene, sesquisabinene B and several minor products. Can also act in vitro as a monoterpene synthase, converting geranyl diphosphate to (S)-(-)-limonene, beta-myrcene and 11 other monoterpenes. The polypeptide is Sesquithujene synthase A (Zea mays (Maize)).